Consider the following 285-residue polypeptide: (3S)-malyl-CoA thioesterase (285 aa).

2 residues coordinate substrate: Arg-70 and Glu-122. Mg(2+) is bound by residues Glu-122 and Asp-148.

Belongs to the HpcH/HpaI aldolase family. Homodimer or homotrimer. It depends on Mg(2+) as a cofactor.

The enzyme catalyses (S)-malyl-CoA + H2O = (S)-malate + CoA + H(+). Catalyzes the hydrolysis of (3S)-malyl-CoA to (3S)-malate and free CoA. Inactive towards beta-methylmalyl-CoA and other CoA esters. The sequence is that of (3S)-malyl-CoA thioesterase from Cereibacter sphaeroides (strain ATCC 17025 / ATH 2.4.3) (Rhodobacter sphaeroides).